The following is a 312-amino-acid chain: DNA-directed RNA polymerase subunit alpha (312 aa).

Residues 1–229 (MLQYQIDRIE…ELFQPLATVT (229 aa)) form an alpha N-terminal domain (alpha-NTD) region. Positions 246 to 312 (IPLEELNLSV…ISIPQSRTSA (67 aa)) are alpha C-terminal domain (alpha-CTD).

This sequence belongs to the RNA polymerase alpha chain family. As to quaternary structure, in cyanobacteria the RNAP catalytic core is composed of 2 alpha, 1 beta, 1 beta', 1 gamma and 1 omega subunit. When a sigma factor is associated with the core the holoenzyme is formed, which can initiate transcription.

It carries out the reaction RNA(n) + a ribonucleoside 5'-triphosphate = RNA(n+1) + diphosphate. Functionally, DNA-dependent RNA polymerase catalyzes the transcription of DNA into RNA using the four ribonucleoside triphosphates as substrates. This chain is DNA-directed RNA polymerase subunit alpha, found in Prochlorococcus marinus (strain SARG / CCMP1375 / SS120).